The primary structure comprises 216 residues: Minor fimbrial subunit HifD (216 aa).

The signal sequence occupies residues 1-19 (MQKTPKKLTALCHQQSTAS). A lipid anchor (N-palmitoyl cysteine) is attached at C20. C20 carries the S-diacylglycerol cysteine lipid modification. Positions 159 to 180 (PINVDGSQANSEKAPDTGKEQN) are disordered.

Belongs to the fimbrial protein family.

It localises to the cell membrane. The protein localises to the fimbrium. May be a minor structural protein required for pilus biogenesis. The sequence is that of Minor fimbrial subunit HifD (hifD) from Haemophilus influenzae.